Here is a 633-residue protein sequence, read N- to C-terminus: Extracellular metalloproteinase mep (633 aa).

A signal peptide spans 1 to 18; that stretch reads MRLLSLAGAMALPLCVLA. The propeptide occupies 19–244; the sequence is HPTHRTRGIA…IHGVVDYISD (226 aa). Asn326 carries N-linked (GlcNAc...) asparagine glycosylation. Residue His428 coordinates Zn(2+). The active site involves Glu429. Position 432 (His432) interacts with Zn(2+). Residue Asn514 is glycosylated (N-linked (GlcNAc...) asparagine).

This sequence belongs to the peptidase M36 family. The cofactor is Zn(2+).

The protein localises to the secreted. In terms of biological role, secreted metalloproteinase that allows assimilation of proteinaceous substrates. This Aspergillus terreus (strain NIH 2624 / FGSC A1156) protein is Extracellular metalloproteinase mep (mep).